The sequence spans 672 residues: Spermatid perinuclear RNA-binding protein (672 aa).

The DZF domain maps to 5 to 363; sequence RSFANDDRHV…ALKRPFEDGL (359 aa). Disordered regions lie at residues 52–73 and 349–371; these read TNKGTKTEGETEVKKDEAGENY and GAGSSALKRPFEDGLGDDKDPNK. The segment covering 357 to 371 has biased composition (basic and acidic residues); it reads RPFEDGLGDDKDPNK. The 67-residue stretch at 387 to 453 folds into the DRBM 1 domain; that stretch reads DLMNALMRLN…AVKVLQAMGY (67 aa). Residues 466–476 are compositionally biased toward basic and acidic residues; the sequence is SDEKSDNESKN. The interval 466 to 499 is disordered; it reads SDEKSDNESKNETVSSNSSNNTGNSTTETSSTLE. Over residues 477–497 the composition is skewed to low complexity; sequence ETVSSNSSNNTGNSTTETSST. The region spanning 510 to 576 is the DRBM 2 domain; it reads SGKNPVMELN…ALAALEKLFS (67 aa). Asymmetric dimethylarginine is present on residues R612 and R617.

Interacts with EIF2AK2. Associates with microtubules; it is unsure whether such interaction is direct or indirect.

It is found in the cytoplasm. Its function is as follows. Involved in spermatogenesis and sperm function. Plays a role in regulation of cell growth. Binds to double-stranded DNA and RNA. Binds most efficiently to poly(I:C) RNA than to poly(dI:dC) DNA. Binds also to single-stranded poly(G) RNA. Binds non-specifically to the mRNA PRM1 3'-UTR and adenovirus VA RNA. The polypeptide is Spermatid perinuclear RNA-binding protein (STRBP) (Pongo abelii (Sumatran orangutan)).